Consider the following 540-residue polypeptide: Phenylalanine--tRNA ligase beta subunit (540 aa).

One can recognise a B5 domain in the interval 268–342 (LRHTSVPFSL…MAYGYDRFTL (75 aa)). Residues D320, D326, E329, and D330 each contribute to the Mg(2+) site.

This sequence belongs to the phenylalanyl-tRNA synthetase beta subunit family. Type 2 subfamily. Tetramer of two alpha and two beta subunits. Mg(2+) is required as a cofactor.

It localises to the cytoplasm. It catalyses the reaction tRNA(Phe) + L-phenylalanine + ATP = L-phenylalanyl-tRNA(Phe) + AMP + diphosphate + H(+). The polypeptide is Phenylalanine--tRNA ligase beta subunit (Metallosphaera sedula (strain ATCC 51363 / DSM 5348 / JCM 9185 / NBRC 15509 / TH2)).